Reading from the N-terminus, the 409-residue chain is Beta-arrestin-2 (409 aa).

The residue at position 48 (Tyr48) is a Phosphotyrosine. Pro176 and Pro181 each carry hydroxyproline; by PHD2. The tract at residues Ala240–Cys409 is interaction with TRAF6. Ser360 bears the Phosphoserine mark. The tract at residues Pro363 to Cys409 is interaction with AP2B1. Thr382 is subject to Phosphothreonine. A [DE]-X(1,2)-F-X-X-[FL]-X-X-X-R motif motif is present at residues Asp385–Arg395.

Belongs to the arrestin family. As to quaternary structure, homooligomer; the self-association is mediated by InsP6-binding. Heterooligomer with ARRB1; the association is mediated by InsP6-binding. Interacts with ADRB2 and CHRM2. Interacts with PDE4A. Interacts with PDE4D. Interacts with MAPK10, MAPK1 and MAPK3. Interacts with DRD2. Interacts with FSHR. Interacts with CLTC. Interacts with HTR2C. Interacts with CCR5. Interacts with CXCR4. Interacts with SRC. Interacts with DUSP16; the interaction is interrupted by stimulation of AGTR1 and activation of MAPK10. Interacts with CHUK; the interaction is enhanced stimulation of ADRB2. Interacts with RELA. Interacts with MDM2; the interaction is enhanced by activation of GPCRs. Interacts with SLC9A5. Interacts with TRAF6. Interacts with IGF1R. Interacts with ENG. Interacts with KIR2DL1, KIR2DL3 and KIR2DL4. Interacts with LDLR. Interacts with AP2B1. Interacts with C5AR1. Interacts with RAF1. Interacts with MAP2K1. Interacts with MAPK1. Interacts with MAPK10; the interaction enhances MAPK10 activation by MAP3K5. Interacts with MAP2K4; the interaction is enhanced by presence of MAP3K5 and MAPK10. Interacts with MAP3K5. Interacts with AKT1. Interacts with IKBKB and MAP3K14. Interacts with SMO (activated). Interacts with GSK3A and GSK3B. Associates with protein phosphatase 2A (PP2A). Interacts with DHX8; the interaction is detected in the nucleus upon OR1D2 stimulation. Interacts with GAPDHS; the interaction is detected in the nucleus upon OR1D2 stimulation. Interacts with H2AFX; the interaction is detected in the nucleus upon OR1D2 stimulation. Interacts with KIF14; the interaction is detected in the nucleus upon OR1D2 stimulation. Interacts with RCC1; the interaction is detected in the nucleus upon OR1D2 stimulation. Interacts with CXCR4; the interaction is dependent on C-terminal phosphorylation of CXCR4 and allows activation of MAPK1 and MAPK3. Interacts with GPR143. Interacts with HCK and CXCR1 (phosphorylated). Interacts with ACKR3 and ACKR4. Interacts with ARRDC1; the interaction is direct. Interacts with GPR61, GPR62 and GPR135. Interacts (via NACHT and LRR domains) with NLRP3; this interaction is direct and inducible by omega-3 polyunsaturated fatty acids (PUFAs). Interacts with FFAR4 (via C-terminus); this interaction is stimulated by long-chain fatty acids (LCFAs). Interacts with GPR35. Interacts with GPR84. Interacts with TIGIT; this interaction inhibits the NF-kappa-B pathway. Interacts with TGFBR3. Post-translationally, phosphorylated at Thr-382 in the cytoplasm; probably dephosphorylated at the plasma membrane. The phosphorylation does not regulate internalization and recycling of ADRB2, interaction with clathrin or AP2B1. The ubiquitination status appears to regulate the formation and trafficking of beta-arrestin-GPCR complexes and signaling. Ubiquitination appears to occur GPCR-specific. Ubiquitinated by MDM2; the ubiquitination is required for rapid internalization of ADRB2. Deubiquitinated by USP33; the deubiquitination leads to a dissociation of the beta-arrestin-GPCR complex. Stimulation of a class A GPCR, such as ADRB2, induces transient ubiquitination and subsequently promotes association with USP33. Stimulation of a class B GPCR promotes a sustained ubiquitination. Deubiquitinated by USP20; allowing USP20 to deubiquitinate TRAF6 leading to inhibition of NF-kappa-B signaling. In terms of processing, hydroxylation by PHD2 modulates the rate of internalization by slowing down recruitment to the plasma membrane and inhibiting subsequent co-internalization with class A receptors.

It localises to the cytoplasm. It is found in the nucleus. The protein localises to the cell membrane. Its subcellular location is the membrane. The protein resides in the clathrin-coated pit. It localises to the cytoplasmic vesicle. In terms of biological role, functions in regulating agonist-mediated G-protein coupled receptor (GPCR) signaling by mediating both receptor desensitization and resensitization processes. During homologous desensitization, beta-arrestins bind to the GPRK-phosphorylated receptor and sterically preclude its coupling to the cognate G-protein; the binding appears to require additional receptor determinants exposed only in the active receptor conformation. The beta-arrestins target many receptors for internalization by acting as endocytic adapters (CLASPs, clathrin-associated sorting proteins) and recruiting the GPRCs to the adapter protein 2 complex 2 (AP-2) in clathrin-coated pits (CCPs). However, the extent of beta-arrestin involvement appears to vary significantly depending on the receptor, agonist and cell type. Internalized arrestin-receptor complexes traffic to intracellular endosomes, where they remain uncoupled from G-proteins. Two different modes of arrestin-mediated internalization occur. Class A receptors, like ADRB2, OPRM1, ENDRA, D1AR and ADRA1B dissociate from beta-arrestin at or near the plasma membrane and undergo rapid recycling. Class B receptors, like AVPR2, AGTR1, NTSR1, TRHR and TACR1 internalize as a complex with arrestin and traffic with it to endosomal vesicles, presumably as desensitized receptors, for extended periods of time. Receptor resensitization then requires that receptor-bound arrestin is removed so that the receptor can be dephosphorylated and returned to the plasma membrane. Mediates endocytosis of CCR7 following ligation of CCL19 but not CCL21. Involved in internalization of P2RY1, P2RY4, P2RY6 and P2RY11 and ATP-stimulated internalization of P2RY2. Involved in phosphorylation-dependent internalization of OPRD1 and subsequent recycling or degradation. Involved in ubiquitination of IGF1R. Beta-arrestins function as multivalent adapter proteins that can switch the GPCR from a G-protein signaling mode that transmits short-lived signals from the plasma membrane via small molecule second messengers and ion channels to a beta-arrestin signaling mode that transmits a distinct set of signals that are initiated as the receptor internalizes and transits the intracellular compartment. Acts as a signaling scaffold for MAPK pathways such as MAPK1/3 (ERK1/2) and MAPK10 (JNK3). ERK1/2 and JNK3 activated by the beta-arrestin scaffold are largely excluded from the nucleus and confined to cytoplasmic locations such as endocytic vesicles, also called beta-arrestin signalosomes. Acts as a signaling scaffold for the AKT1 pathway. GPCRs for which the beta-arrestin-mediated signaling relies on both ARRB1 and ARRB2 (codependent regulation) include ADRB2, F2RL1 and PTH1R. For some GPCRs the beta-arrestin-mediated signaling relies on either ARRB1 or ARRB2 and is inhibited by the other respective beta-arrestin form (reciprocal regulation). Increases ERK1/2 signaling in AGTR1- and AVPR2-mediated activation (reciprocal regulation). Involved in CCR7-mediated ERK1/2 signaling involving ligand CCL19. Is involved in type-1A angiotensin II receptor/AGTR1-mediated ERK activity. Is involved in type-1A angiotensin II receptor/AGTR1-mediated MAPK10 activity. Is involved in dopamine-stimulated AKT1 activity in the striatum by disrupting the association of AKT1 with its negative regulator PP2A. Involved in AGTR1-mediated chemotaxis. Appears to function as signaling scaffold involved in regulation of MIP-1-beta-stimulated CCR5-dependent chemotaxis. Involved in attenuation of NF-kappa-B-dependent transcription in response to GPCR or cytokine stimulation by interacting with and stabilizing CHUK. Suppresses UV-induced NF-kappa-B-dependent activation by interacting with CHUK. The function is promoted by stimulation of ADRB2 and dephosphorylation of ARRB2. Involved in p53/TP53-mediated apoptosis by regulating MDM2 and reducing the MDM2-mediated degradation of p53/TP53. May serve as nuclear messenger for GPCRs. Upon stimulation of OR1D2, may be involved in regulation of gene expression during the early processes of fertilization. Also involved in regulation of receptors other than GPCRs. Involved in endocytosis of TGFBR2 and TGFBR3 and down-regulates TGF-beta signaling such as NF-kappa-B activation. Involved in endocytosis of low-density lipoprotein receptor/LDLR. Involved in endocytosis of smoothened homolog/Smo, which also requires GRK2. Involved in endocytosis of SLC9A5. Involved in endocytosis of ENG and subsequent TGF-beta-mediated ERK activation and migration of epithelial cells. Involved in Toll-like receptor and IL-1 receptor signaling through the interaction with TRAF6 which prevents TRAF6 autoubiquitination and oligomerization required for activation of NF-kappa-B and JUN. Involved in insulin resistance by acting as insulin-induced signaling scaffold for SRC, AKT1 and INSR. Involved in regulation of inhibitory signaling of natural killer cells by recruiting PTPN6 and PTPN11 to KIR2DL1. Involved in IL8-mediated granule release in neutrophils. Involved in the internalization of the atypical chemokine receptor ACKR3. Acts as an adapter protein coupling FFAR4 receptor to specific downstream signaling pathways, as well as mediating receptor endocytosis. During the activation step of NLRP3 inflammasome, directly associates with NLRP3 leading to inhibition of pro-inflammatory cytokine release and inhibition of inflammation. The protein is Beta-arrestin-2 (ARRB2) of Homo sapiens (Human).